We begin with the raw amino-acid sequence, 527 residues long: UDP-glucuronosyltransferase 2A3 (527 aa).

The N-terminal stretch at 1 to 23 (MRSEKSALVFLLLQLFCVGCGFC) is a signal peptide. The Extracellular segment spans residues 24–486 (GKVLVWPCDM…AAHNLTWFQH (463 aa)). N313 carries an N-linked (GlcNAc...) asparagine glycan. Residues 487–507 (YSIDVIGFLLACVATAIFLFT) form a helical membrane-spanning segment. At 508 to 523 (KCCLFSCQKFNKTRKI) the chain is on the cytoplasmic side.

It belongs to the UDP-glycosyltransferase family.

The protein localises to the membrane. The catalysed reaction is glucuronate acceptor + UDP-alpha-D-glucuronate = acceptor beta-D-glucuronoside + UDP + H(+). In terms of biological role, UDP-glucuronosyltransferases catalyze phase II biotransformation reactions in which lipophilic substrates are conjugated with glucuronic acid to increase water solubility and enhance excretion. They are of major importance in the conjugation and subsequent elimination of potentially toxic xenobiotics and endogenous compounds. The polypeptide is UDP-glucuronosyltransferase 2A3 (UGT2A3) (Pongo abelii (Sumatran orangutan)).